Reading from the N-terminus, the 367-residue chain is uncharacterized protein (367 aa).

A disordered region spans residues 333–367 (RERRPTLNAQRAHAAAQQQPRRRNRRQQGTGASAS). The segment covering 341-351 (AQRAHAAAQQQ) has biased composition (low complexity).

This is an uncharacterized protein from Amazona oratrix (yellow-headed parrot).